Reading from the N-terminus, the 94-residue chain is DNA-directed RNA polymerase subunit Rpo11 (94 aa).

Belongs to the archaeal Rpo11/eukaryotic RPB11/RPC19 RNA polymerase subunit family. Part of the RNA polymerase complex.

Its subcellular location is the cytoplasm. The catalysed reaction is RNA(n) + a ribonucleoside 5'-triphosphate = RNA(n+1) + diphosphate. DNA-dependent RNA polymerase (RNAP) catalyzes the transcription of DNA into RNA using the four ribonucleoside triphosphates as substrates. This is DNA-directed RNA polymerase subunit Rpo11 from Halobacterium salinarum (strain ATCC 700922 / JCM 11081 / NRC-1) (Halobacterium halobium).